The sequence spans 749 residues: uncharacterized protein (749 aa).

4 disordered regions span residues 1–58 (MGTV…QPSN), 124–170 (DANA…PSPL), 200–291 (SRFS…PPVS), and 385–405 (YTWS…NPST). A compositionally biased stretch (low complexity) spans 13-24 (LNNGLSSNNGSS). Composition is skewed to polar residues over residues 149-159 (KSASKDSNAFN), 238-252 (ESKT…PSLN), 265-275 (LNYQNSSLNPS), and 388-405 (SRHS…NPST). The PSP1 C-terminal domain occupies 644–729 (KRILRKAQPH…YKTRIWMCAV (86 aa)).

This is an uncharacterized protein from Schizosaccharomyces pombe (strain 972 / ATCC 24843) (Fission yeast).